The following is a 368-amino-acid chain: Mitochondrial intermembrane space import and assembly protein 40 (368 aa).

A mitochondrion-targeting transit peptide spans 1–29 (MYRNTMRSASRPVIASLRSSTIRAAPRRF). The Mitochondrial matrix portion of the chain corresponds to 30 to 47 (ASTAPADKPRSFKGSLVR). Residues 48 to 65 (LGLAFGAVYYYNTSPIFA) traverse the membrane as a helical; Signal-anchor for type II membrane protein segment. Residues 66-368 (DEAISKTVPA…AAKKNAEKKQ (303 aa)) are Mitochondrial intermembrane-facing. Basic and acidic residues predominate over residues 95–104 (RKQIKAKSEE). Positions 95 to 144 (RKQIKAKSEETAASSKTPESQQSNPQTAAADGSPAALEEEAGQQGAFNPE) are disordered. The segment covering 105 to 121 (TAASSKTPESQQSNPQT) has biased composition (polar residues). 3 cysteine pairs are disulfide-bonded: cysteine 152–cysteine 154, cysteine 163–cysteine 196, and cysteine 173–cysteine 186. Residues 160–204 (DGPCGEEFKTAFSCFVFSQEEPKGMDCIDKFQGMQECFKKYPDIY) enclose the CHCH domain. Short sequence motifs (cx9C motif) lie at residues 163-173 (CGEEFKTAFSC) and 186-196 (CIDKFQGMQEC). Residues 208 to 310 (LADDEDGAPT…GSRMVQDVAI (103 aa)) form a disordered region. Positions 240–263 (LARETKDKTAADATKFDDSQKPAE) are enriched in basic and acidic residues. Residues 264 to 280 (SKTPAKTTSTSTDSAQK) are compositionally biased toward low complexity. Basic and acidic residues predominate over residues 283–295 (VDAHRDAEPKSDA).

Monomer. Cu(2+) is required as a cofactor. The cofactor is Zn(2+).

The protein localises to the mitochondrion inner membrane. In terms of biological role, required for the import and folding of small cysteine-containing proteins (small Tim) in the mitochondrial intermembrane space (IMS). Forms a redox cycle with ERV1 that involves a disulfide relay system. Precursor proteins to be imported into the IMS are translocated in their reduced form into the mitochondria. The oxidized form of MIA40 forms a transient intermolecular disulfide bridge with the reduced precursor protein, resulting in oxidation of the precursor protein that now contains an intramolecular disulfide bond and is able to undergo folding in the IMS. This is Mitochondrial intermembrane space import and assembly protein 40 (MIA40) from Gibberella zeae (strain ATCC MYA-4620 / CBS 123657 / FGSC 9075 / NRRL 31084 / PH-1) (Wheat head blight fungus).